The following is a 273-amino-acid chain: Large ribosomal subunit protein uL2 (273 aa).

A disordered region spans residues 228–273 (VDHPHGGGEGKTSGGRHPVTPWGFPTKGKKTRKNKRTSKFIVKKRK). The span at 254-273 (KGKKTRKNKRTSKFIVKKRK) shows a compositional bias: basic residues.

The protein belongs to the universal ribosomal protein uL2 family. As to quaternary structure, part of the 50S ribosomal subunit. Forms a bridge to the 30S subunit in the 70S ribosome.

One of the primary rRNA binding proteins. Required for association of the 30S and 50S subunits to form the 70S ribosome, for tRNA binding and peptide bond formation. It has been suggested to have peptidyltransferase activity; this is somewhat controversial. Makes several contacts with the 16S rRNA in the 70S ribosome. This chain is Large ribosomal subunit protein uL2, found in Rickettsia africae (strain ESF-5).